The chain runs to 477 residues: Cytoplasmic 60S subunit biogenesis factor ZNF622 (477 aa).

An N-acetylalanine modification is found at alanine 2. U1-type zinc fingers lie at residues 4 to 28 and 67 to 91; these read YTCITCRVAFRDADMQRAHYKTDWH and TYCTVCSKKFASFNAYENHLKSRRH. Positions 135 to 212 are disordered; sequence AIKAQPSMSP…EDLDGDDWED (78 aa). Residues 167–178 are compositionally biased toward basic and acidic residues; sequence GTHDRDPSEKPP. Acidic residues predominate over residues 196-212; it reads EDSEEEEEDLDGDDWED. Residue serine 276 is modified to Phosphoserine.

It belongs to the REI1 family. As to quaternary structure, homo- and heterodimer. Associates with pre-60S ribosomal particles. Interacts with MELK and MYBL2. Interacts with DNAJC21. Post-translationally, phosphorylated by MELK. The phosphorylation may redirect the protein to the nucleus. Ubiquitinated by HECTD1, leading to its degradation. Expressed in lung, kidney, spleen, liver and brain with lowest expression in kidney.

The protein resides in the cytoplasm. The protein localises to the nucleus. Pre-60S-associated cytoplasmic factor involved in the cytoplasmic maturation of the 60S subunit. This is Cytoplasmic 60S subunit biogenesis factor ZNF622 from Homo sapiens (Human).